The chain runs to 596 residues: Transcription factor COE3 (596 aa).

Residues Met-1–Ser-22 form a disordered region. Residues Arg-63 to Asn-66 are interaction with DNA. A C5-type zinc finger spans residues Cys-151 to Cys-170. 2 interaction with DNA regions span residues Asn-197–Asn-204 and Asn-236–Lys-239. The 84-residue stretch at Pro-263–Thr-346 folds into the IPT/TIG domain. A disordered region spans residues Thr-451 to Tyr-483.

It belongs to the COE family. In terms of assembly, forms either a homodimer or a heterodimer with a related family member. As to expression, expressed in brain.

It is found in the nucleus. Transcriptional activator. Recognizes variations of the palindromic sequence 5'-ATTCCCNNGGGAATT-3'. The polypeptide is Transcription factor COE3 (EBF3) (Homo sapiens (Human)).